Here is a 302-residue protein sequence, read N- to C-terminus: Sulfate adenylyltransferase subunit 2 (302 aa).

A disordered region spans residues 280–302 (RQGRAIDHDQSGSMELKKRQGYF).

This sequence belongs to the PAPS reductase family. CysD subfamily. In terms of assembly, heterodimer composed of CysD, the smaller subunit, and CysN.

The catalysed reaction is sulfate + ATP + H(+) = adenosine 5'-phosphosulfate + diphosphate. Its pathway is sulfur metabolism; hydrogen sulfide biosynthesis; sulfite from sulfate: step 1/3. In terms of biological role, with CysN forms the ATP sulfurylase (ATPS) that catalyzes the adenylation of sulfate producing adenosine 5'-phosphosulfate (APS) and diphosphate, the first enzymatic step in sulfur assimilation pathway. APS synthesis involves the formation of a high-energy phosphoric-sulfuric acid anhydride bond driven by GTP hydrolysis by CysN coupled to ATP hydrolysis by CysD. In Vibrio atlanticus (strain LGP32) (Vibrio splendidus (strain Mel32)), this protein is Sulfate adenylyltransferase subunit 2.